A 710-amino-acid polypeptide reads, in one-letter code: Protein-glutamine gamma-glutamyltransferase Z (710 aa).

Active-site residues include C279, H338, and D361. 4 residues coordinate Ca(2+): N401, D403, E450, and E455.

It belongs to the transglutaminase superfamily. Transglutaminase family. It depends on Ca(2+) as a cofactor. In terms of tissue distribution, widely expressed.

It carries out the reaction L-glutaminyl-[protein] + L-lysyl-[protein] = [protein]-L-lysyl-N(6)-5-L-glutamyl-[protein] + NH4(+). Its function is as follows. Catalyzes the cross-linking of proteins and the conjugation of polyamines to proteins. This Homo sapiens (Human) protein is Protein-glutamine gamma-glutamyltransferase Z (TGM7).